We begin with the raw amino-acid sequence, 117 residues long: Large ribosomal subunit protein bL20c (117 aa).

The protein belongs to the bacterial ribosomal protein bL20 family.

Its subcellular location is the plastid. The protein localises to the chloroplast. Its function is as follows. Binds directly to 23S ribosomal RNA and is necessary for the in vitro assembly process of the 50S ribosomal subunit. It is not involved in the protein synthesizing functions of that subunit. The chain is Large ribosomal subunit protein bL20c (rpl20) from Bigelowiella natans (Pedinomonas minutissima).